The chain runs to 453 residues: GTPase Der (453 aa).

EngA-type G domains are found at residues 3-167 (PIIV…ISEK) and 187-360 (IKVA…EDSK). GTP-binding positions include 9–16 (GRTNVGKS), 57–61 (DTAGL), 119–122 (NKID), 193–200 (GRPNVGKS), 240–244 (DTAGA), and 305–308 (NKCD). A KH-like domain is found at 361–445 (RKISTSTLIK…PIQIQFKDNE (85 aa)).

It belongs to the TRAFAC class TrmE-Era-EngA-EngB-Septin-like GTPase superfamily. EngA (Der) GTPase family. As to quaternary structure, associates with the 50S ribosomal subunit.

Functionally, GTPase that plays an essential role in the late steps of ribosome biogenesis. This chain is GTPase Der, found in Buchnera aphidicola subsp. Acyrthosiphon pisum (strain 5A).